The sequence spans 450 residues: MQLNIEEKSSVKKVLHIEIPKEDVAKELDTAYNELKKTATVKGFRKGKIPRKILETRFSKDVHADLVPHLVQNAFSEALDEHKFNLVGGPQVDPPELTPGEALSFDISIEVMPELEAVDFKGIELKKTMYEATDQEVDAQIQMIRKTMATKEKVTEERPVKVEDFVLIDYQGFVDGAPCDAAPKVENYVMAIGSNTLPAEFSEKLLGAIPVKEMDIDVVYADDDKDEALAGKTVIYKVTLKEIQEQILPPVDDTLVENLGQYKNLDELKAAILDNLKKGYEQRTQHELSEQIFTDLLEKIEFEVPDTMVDAELQGIIAEAEQAYAQNNIKLEDVGLSQDFLKTQYRGVAEKQARRHILLGKIIDQENLELTEDELEAGYAEMALGMNASVDAVKNFFKMDGRQLEYYKHTQLEKKAVRLIIEQGSVTEVAPEVETEVSESAADVEDKTDQ.

The 87-residue stretch at 163–249 (EDFVLIDYQG…LKEIQEQILP (87 aa)) folds into the PPIase FKBP-type domain. Positions 431–443 (PEVETEVSESAAD) are enriched in acidic residues. Residues 431-450 (PEVETEVSESAADVEDKTDQ) form a disordered region.

The protein belongs to the FKBP-type PPIase family. Tig subfamily.

Its subcellular location is the cytoplasm. It carries out the reaction [protein]-peptidylproline (omega=180) = [protein]-peptidylproline (omega=0). Functionally, involved in protein export. Acts as a chaperone by maintaining the newly synthesized protein in an open conformation. Functions as a peptidyl-prolyl cis-trans isomerase. The protein is Trigger factor of Desulforapulum autotrophicum (strain ATCC 43914 / DSM 3382 / VKM B-1955 / HRM2) (Desulfobacterium autotrophicum).